Consider the following 148-residue polypeptide: MSQTPFWQQKTLAEMSEQEWESLCDGCGQCCLNKLIDEDTDEIYFTNVACDQLNIKSCQCRNYERRFELEEDCIKLTRENLTTFDWLPPTCAYRLIGEGKPLFSWHPLVSGSKAAMHGERITVRHIAVRESEVVDWQDHIMNKPSWAR.

Belongs to the UPF0260 family.

The protein is UPF0260 protein Spro_2751 of Serratia proteamaculans (strain 568).